Reading from the N-terminus, the 367-residue chain is 3-dehydroquinate synthase (367 aa).

Residues 69-74 (DGESHK), 103-107 (GVIGD), 127-128 (TT), K140, K149, and 167-170 (TLAT) each bind NAD(+). Zn(2+) is bound by residues E182, H245, and H262.

It belongs to the sugar phosphate cyclases superfamily. Dehydroquinate synthase family. It depends on Co(2+) as a cofactor. Requires Zn(2+) as cofactor. The cofactor is NAD(+).

It localises to the cytoplasm. The catalysed reaction is 7-phospho-2-dehydro-3-deoxy-D-arabino-heptonate = 3-dehydroquinate + phosphate. The protein operates within metabolic intermediate biosynthesis; chorismate biosynthesis; chorismate from D-erythrose 4-phosphate and phosphoenolpyruvate: step 2/7. Its function is as follows. Catalyzes the conversion of 3-deoxy-D-arabino-heptulosonate 7-phosphate (DAHP) to dehydroquinate (DHQ). The chain is 3-dehydroquinate synthase from Stutzerimonas stutzeri (strain A1501) (Pseudomonas stutzeri).